The primary structure comprises 430 residues: Histidine--tRNA ligase (430 aa).

It belongs to the class-II aminoacyl-tRNA synthetase family. In terms of assembly, homodimer.

The protein resides in the cytoplasm. It catalyses the reaction tRNA(His) + L-histidine + ATP = L-histidyl-tRNA(His) + AMP + diphosphate + H(+). The protein is Histidine--tRNA ligase of Gloeothece citriformis (strain PCC 7424) (Cyanothece sp. (strain PCC 7424)).